A 208-amino-acid chain; its full sequence is Thymidylate kinase (208 aa).

ATP is bound at residue 12–19 (GVDGAGKS).

The protein belongs to the thymidylate kinase family.

The catalysed reaction is dTMP + ATP = dTDP + ADP. Phosphorylation of dTMP to form dTDP in both de novo and salvage pathways of dTTP synthesis. The chain is Thymidylate kinase from Bordetella bronchiseptica (strain ATCC BAA-588 / NCTC 13252 / RB50) (Alcaligenes bronchisepticus).